Reading from the N-terminus, the 187-residue chain is MKISGVDIRPGNIIEYEGGIWRAVKIQHTQPGKGGAYMQVEMKNLIDGRKNNVRFRSAETVERVRLDTKDFQFLFAEGEDLTFMDKDTYEQITLPRDLLGDAAAFLQDGMDVVMELYEERPISVQLPDQVEATIVEADAVVKGQTASSSYKPAMLDNGVRVMVPPHISSGTRIVVDVYEQTYVRRAD.

Belongs to the elongation factor P family.

It is found in the cytoplasm. Its pathway is protein biosynthesis; polypeptide chain elongation. Its function is as follows. Involved in peptide bond synthesis. Stimulates efficient translation and peptide-bond synthesis on native or reconstituted 70S ribosomes in vitro. Probably functions indirectly by altering the affinity of the ribosome for aminoacyl-tRNA, thus increasing their reactivity as acceptors for peptidyl transferase. The sequence is that of Elongation factor P from Rhizorhabdus wittichii (strain DSM 6014 / CCUG 31198 / JCM 15750 / NBRC 105917 / EY 4224 / RW1) (Sphingomonas wittichii).